Consider the following 277-residue polypeptide: F41 fimbrial protein (277 aa).

The N-terminal stretch at 1–22 (MKKTLIALAVAASAAVSGSVMA) is a signal peptide.

The protein belongs to the fimbrial K88 protein family.

Its subcellular location is the fimbrium. Functionally, fimbriae (also called pili), polar filaments radiating from the surface of the bacterium to a length of 0.5-1.5 micrometers and numbering 100-300 per cell, enable bacteria to colonize the epithelium of specific host organs. This is F41 fimbrial protein (FimF41a) from Escherichia coli.